Reading from the N-terminus, the 344-residue chain is MVRARHQPGGLCLLLLLLCQFMEDRSAQAGNCWLRQAKNGRCQVLYKTELSKEECCSTGRLSTSWTEEDVNDNTLFKWMIFNGGAPNCIPCKETCENVDCGPGKKCRMNKKNKPRCVCAPDCSNITWKGPVCGLDGKTYRNECALLKARCKEQPELEVQYQGRCKKTCRDVFCPGSSTCVVDQTNNAYCVTCNRICPEPASSEQYLCGNDGVTYSSACHLRKATCLLGRSIGLAYEGKCIKAKSCEDIQCTGGKKCLWDFKVGRGRCSLCDELCPDSKSDEPVCASDNATYASECAMKEAACSSGVLLEVKHSGSCNSISEDTEEEEEDEDQDYSFPISSILEW.

The first 29 residues, Met1 to Ala29, serve as a signal peptide directing secretion. Residues Gly30 to Gly103 enclose the TB domain. 18 cysteine pairs are disulfide-bonded: Cys32–Cys55, Cys42–Cys88, Cys56–Cys91, Cys95–Cys106, Cys100–Cys116, Cys118–Cys150, Cys122–Cys143, Cys132–Cys164, Cys168–Cys179, Cys173–Cys189, Cys192–Cys225, Cys196–Cys218, Cys207–Cys239, Cys245–Cys256, Cys250–Cys267, Cys270–Cys302, Cys274–Cys295, and Cys284–Cys316. One can recognise a Follistatin-like 1 domain in the interval Thr94–Val117. Positions Asn112–Lys166 constitute a Kazal-like 1 domain. N-linked (GlcNAc...) asparagine glycosylation is present at Asn124. The region spanning Thr167–Val190 is the Follistatin-like 2 domain. The Kazal-like 2 domain occupies Asn186–Lys241. A Follistatin-like 3 domain is found at Ser244–Ser268. Positions Arg264–Ser318 constitute a Kazal-like 3 domain. N-linked (GlcNAc...) asparagine glycosylation is present at Asn288. A disordered region spans residues Gly314–Trp344. The span at Glu321–Asp333 shows a compositional bias: acidic residues.

Interacts with GDF11. Interacts with activin A/INHBA. Interacts with MYOSTATIN/MSTN. In terms of tissue distribution, isoform 1 is the predominant isoform in serum but is undetectable in follicular fluid. In the embryo, strong expression is seen in the palatal epithelia, including the medial edge epithelial and midline epithelial seam of the palatal shelves. Less pronounced expression is also seen throughout the palatal shelf and tongue mesenchyme.

It localises to the secreted. Its subcellular location is the nucleus. It is found in the nucleolus. In terms of biological role, multifunctional regulatory protein whose primary function is to antagonize members of the transforming growth factor beta (TGF-beta) superfamily including activin, myostatin, GDF11 or bone morphogenetic proteins (BMPs). Mechanistically, binds to these ligands in the extracellular space, blocking their type II receptor-binding site to inhibit downstream signaling. Plays an essential role in muscle fiber formation and growth both by preventing the repressive effects of myostatin and through SMAD3/AKT/mTOR signaling independently of myostatin. Also promotes neural differentiation by antagonizing the action BMP4. Acts as a specific inhibitor of the biosynthesis and secretion of pituitary follicle stimulating hormone (FSH) by sequestering activin A/INHBA. On the other hand, translocates into the nucleus where it down-regulates rRNA synthesis and ribosome biogenesis to maintain cellular energy homeostasis by binding to rDNA. This is Follistatin from Homo sapiens (Human).